Reading from the N-terminus, the 190-residue chain is MVKKHRETKETDISVELEIYGSGKCEIDTGVGFFDHMLNALCKHSLMDIKLVCKGDLFIDDHHSVEDCGIVLGSAIKESIYPLSCVERYGNSIVVMDEAAVECAIDLSNRPYLVYESSLNEKIGTFDSELIREFFQALAMNAGITLHLIRLRGDNSHHIAEATFKAFAVAFRRAISKNDRMGTPSTKGVL.

The protein belongs to the imidazoleglycerol-phosphate dehydratase family.

It is found in the cytoplasm. It catalyses the reaction D-erythro-1-(imidazol-4-yl)glycerol 3-phosphate = 3-(imidazol-4-yl)-2-oxopropyl phosphate + H2O. The protein operates within amino-acid biosynthesis; L-histidine biosynthesis; L-histidine from 5-phospho-alpha-D-ribose 1-diphosphate: step 6/9. The protein is Imidazoleglycerol-phosphate dehydratase of Campylobacter fetus subsp. fetus (strain 82-40).